We begin with the raw amino-acid sequence, 555 residues long: MAQCNLFYQYPITPILEGHVRNILICTEKDVEKLQSQSSLRLREKIDQGHRDKLLRMRLKTELDALQKKMQKDSDVLNSHLKAIEDALLFTNDGEVNVETKADAQLIPKSPEKLEKFNQVAITPLDPFIRFTDDFRGEMINTFFNNAQMWNFTFGSWFYKLKRVFYNEPGLRRALKLTNVDSLTISKELLAVTVNALEQATVYPIFGSEMSDLEAALCILAAFYSTYENSQIDERTTLVDVITLLPVIFRLLGSEITALKNVSPSGTYFGFNDPSCMKFFVPMRKGKHYAENTFGNHVLIKMLLGRGVMQKIPGEKISQNFDVEARLHGAIKNDVLVYWTYQLMRPKLGNNVPIFIHDQHYLRSGLVAIESLFLLWRILNSESLFNKRVGKFLLTSIFPQLENVDFAENNFEAGNIQNFEYLMHHYVVPMYNLQNDISISTLFPGLVAVCVNESVRLGWEHKCAGAPSDAVQVQSKENPFVEYIRAQMEQQADVAILEKHDCILFHLENGLNITLSFTLPRQRLFAMASSLFNVNDTYDFIYFLVLGFLPIPAVI.

The segment at Met-1–Asp-47 is interaction with major capsid protein/MCP.

The protein belongs to the herpesviridae CVC2 protein family. As to quaternary structure, heterodimerizes with CVC1. Interacts with major capsid protein/MCP and triplex capsid protein 1/TRX1 at the pentamer vertices. Interacts with the large tegument protein/LTP.

It is found in the virion. It localises to the host nucleus. In terms of biological role, capsid vertex-specific component that plays a role during viral DNA encapsidation, assuring correct genome cleavage and presumably stabilizing capsids that contain full-length viral genomes. Participates in the interaction between the capsid and the tegument through interaction with the large tegument protein/LTP. This is Capsid vertex component 2 from Homo sapiens (Human).